The chain runs to 314 residues: Lipid A biosynthesis acyltransferase 2 (314 aa).

A helical membrane pass occupies residues 17–37; that stretch reads LSPVYWFTWFVLGMIAGISMF. The HXXXXD motif signature appears at 137-142; it reads HGWSVD.

It belongs to the LpxL/LpxM/LpxP family. LpxM subfamily.

It is found in the cell inner membrane. The catalysed reaction is an alpha-Kdo-(2-&gt;4)-alpha-Kdo-(2-&gt;6)-(acyl)-lipid IVA + a fatty acyl-[ACP] = an alpha-Kdo-(2-&gt;4)-alpha-Kdo-(2-&gt;6)-lipid A + holo-[ACP]. Its pathway is glycolipid biosynthesis; KDO(2)-lipid A biosynthesis; KDO(2)-lipid A from CMP-3-deoxy-D-manno-octulosonate and lipid IV(A): step 4/4. The protein operates within bacterial outer membrane biogenesis; lipopolysaccharide biosynthesis. Its function is as follows. Catalyzes the transfer of an acyl chain from an acyl-[acyl-carrier-protein] (ACP) to a Kdo(2)-(acyl)-lipid IV(A) to form a Kdo(2)-lipid A. This chain is Lipid A biosynthesis acyltransferase 2, found in Shigella flexneri.